A 325-amino-acid polypeptide reads, in one-letter code: Chain length determinant protein (325 aa).

Over 1 to 31 (MRVENNNVSGQNHDPEQIDLIDLLVQLWRGK) the chain is Cytoplasmic. The chain crosses the membrane as a helical span at residues 32 to 52 (MTIIISVIVAIALAIGYLAVA). At 53–294 (KEKWTSTAIV…LPIRRDSPKK (242 aa)) the chain is on the periplasmic side. Residues 295–315 (AITLILAVLLGGMVGAGIVLG) traverse the membrane as a helical segment. Residues 316–325 (RNALRNYNAK) lie on the Cytoplasmic side of the membrane.

This sequence belongs to the WzzB/Cld/Rol family.

It localises to the cell inner membrane. Its pathway is bacterial outer membrane biogenesis; lipopolysaccharide biosynthesis. Its function is as follows. Confers a modal distribution of chain length on the O-antigen component of lipopolysaccharide (LPS). Gives rise to a reduced number of short chain molecules and increases in numbers of longer molecules. This Shigella dysenteriae protein is Chain length determinant protein (wzzB).